The sequence spans 379 residues: NADH-quinone oxidoreductase subunit D 1 (379 aa).

It belongs to the complex I 49 kDa subunit family. As to quaternary structure, NDH-1 is composed of 14 different subunits. Subunits NuoB, C, D, E, F, and G constitute the peripheral sector of the complex.

The protein resides in the cell inner membrane. It catalyses the reaction a quinone + NADH + 5 H(+)(in) = a quinol + NAD(+) + 4 H(+)(out). Functionally, NDH-1 shuttles electrons from NADH, via FMN and iron-sulfur (Fe-S) centers, to quinones in the respiratory chain. The immediate electron acceptor for the enzyme in this species is believed to be ubiquinone. Couples the redox reaction to proton translocation (for every two electrons transferred, four hydrogen ions are translocated across the cytoplasmic membrane), and thus conserves the redox energy in a proton gradient. The polypeptide is NADH-quinone oxidoreductase subunit D 1 (Anaeromyxobacter sp. (strain K)).